A 599-amino-acid chain; its full sequence is Omega-hydroxyceramide transacylase (599 aa).

A PNPLA domain is found at 16–185 (ISFSGSGFLS…TSMQPCSFWT (170 aa)). A GXSXG motif is present at residues 51 to 55 (GTSAG). The Nucleophile role is filled by S53. D172 serves as the catalytic Proton acceptor. Residues 172-174 (DGG) carry the DGA/G motif. The disordered stretch occupies residues 289 to 563 (PPPPSLQNLP…PASKLKSAPC (275 aa)). 2 stretches are compositionally biased toward polar residues: residues 325–335 (SSAAPSVQTPE) and 350–362 (VSISKQPSVSPLS). Residues 443-454 (SPESPRLLLRSS) are compositionally biased toward low complexity. Positions 468–478 (PLSPSTPPAGP) are enriched in pro residues. A compositionally biased stretch (polar residues) spans 490–501 (ATGSPALSQLTG). Over residues 551-563 (SKKPASKLKSAPC) the composition is skewed to low complexity.

As to expression, specifically expressed in skin by keratinocytes, at the boundary area between the nucleated stratum granulosum and the denucleated stratum corneum in the epidermis (at protein level). Also expressed in stomach and other surface lining tissues like intestine and tongue. Also detected in testis as well as in other tissues but at very low level.

The protein localises to the cytoplasm. It catalyses the reaction an N-(omega-hydroxy-ultra-long chain fatty acyl)-sphingoid base + a (9Z,12Z)-octadecadienoyl-containing triacyl-sn-glycerol = an N-[omega-(9Z,12Z-octadecadienoyloxy)-O-ultra-long chain fatty acyl]-sphingoid base + a diacylglycerol. It carries out the reaction an N-(omega-hydroxy-ultra-long chain fatty acyl)-sphing-4-enine + a (9Z,12Z)-octadecadienoyl-containing triacyl-sn-glycerol = an N-(omega-(9Z,12Z-octadecadienoyloxy)-ultra-long chain fatty acyl)-sphing-4-enine + a diacylglycerol. The catalysed reaction is N-(28-hydroxyoctacosanoyl)-sphing-4-enine + a (9Z,12Z)-octadecadienoyl-containing triacyl-sn-glycerol = N-(28-(9Z,12Z-octadecadienoyloxy)-octacosanoyl)-sphing-4-enine + a diacylglycerol. The enzyme catalyses N-(30-hydroxytriacontanoyl)-sphing-4-enine + 1,2,3-tri-(9Z,12Z)-octadecadienoylglycerol = N-[30-(9Z,12Z-octadecadienoyloxy)-triacontanoyl]-sphing-4-enine + di-(9Z,12Z)-octadecadienoylglycerol. It catalyses the reaction N-(32-hydroxydotriacontanoyl)-sphing-4-enine + a (9Z,12Z)-octadecadienoyl-containing triacyl-sn-glycerol = N-(32-(9Z,12Z-octadecadienoyloxy)-dotricontanoyl)-sphing-4-enine + a diacylglycerol. It carries out the reaction N-(32-hydroxydotriacontenoyl)-sphing-4-enine + a (9Z,12Z)-octadecadienoyl-containing triacyl-sn-glycerol = an N-(32-(9Z,12Z-octadecadienoyloxy)-dotriacontenoyl)-sphing-4-enine + a diacylglycerol. The catalysed reaction is an N-(34-hydroxytetratriacontenoyl)-sphing-4-enine + a (9Z,12Z)-octadecadienoyl-containing triacyl-sn-glycerol = an N-(34-(9Z,12Z-octadecadienoyloxy)-tetratriacontenoyl)-sphing-4-enine + a diacylglycerol. The enzyme catalyses an N-(34-hydroxytetratriacontadienoyl)-sphing-4-enine + a (9Z,12Z)-octadecadienoyl-containing triacyl-sn-glycerol = an N-(34-(9Z,12Z-octadecadienoyloxy)-tetratriacontadienoyl)-sphing-4-enine + a diacylglycerol. It catalyses the reaction an N-(36-hydroxyhexatriacontenoyl)-sphing-4-enine + a (9Z,12Z)-octadecadienoyl-containing triacyl-sn-glycerol = an N-(36-(9Z,12Z-octadecadienoyloxy)-hexatriacontenoyl)-sphing-4-enine + a diacylglycerol. It carries out the reaction an N-(36-hydroxyhexatriacontadienoyl)-sphing-4-enine + a (9Z,12Z)-octadecadienoyl-containing triacyl-sn-glycerol = an N-(36-(9Z,12Z-octadecadienoyloxy)-hexatriacontadienoyl)-sphing-4-enine + a diacylglycerol. The catalysed reaction is an N-(38-hydroxyoctatriacontenoyl)-sphing-4-enine + a (9Z,12Z)-octadecadienoyl-containing triacyl-sn-glycerol = an N-(38-(9Z,12Z-octadecadienoyloxy)-octatriacontenoyl)-sphing-4-enine + a diacylglycerol. Omega-hydroxyceramide transacylase involved in the synthesis of omega-O-acylceramides (esterified omega-hydroxyacyl-sphingosine; EOS), which are extremely hydrophobic lipids involved in skin barrier formation. Catalyzes the last step of the synthesis of omega-O-acylceramides by transferring linoleic acid from triglycerides to an omega-hydroxyceramide. Omega-O-acylceramides, are required for the biogenesis of lipid lamellae in the stratum corneum and the formation of the cornified lipid envelope which are essential for the epidermis barrier function. These lipids also play a role in keratinocyte differentiation. May also act on omega-hydroxylated ultra-long chain fatty acids (omega-OH ULCFA) and acylglucosylceramides (GlcEOS). The chain is Omega-hydroxyceramide transacylase from Mus musculus (Mouse).